A 162-amino-acid chain; its full sequence is Dihydrofolate reductase (162 aa).

The DHFR domain maps to 3 to 161; it reads KITIIAACAE…VAYTFVHYLG (159 aa). 7–9 contributes to the substrate binding site; the sequence is IAA. NADP(+) is bound by residues 8-9 and 16-21; these read AA and IGAGNA. Asp29 contacts substrate. An NADP(+)-binding site is contributed by 45–48; the sequence is GRKT. Arg60 lines the substrate pocket. Residues 65–68 and 98–103 each bind NADP(+); these read ISRQ and MGGAQI. Thr117 is a substrate binding site.

Belongs to the dihydrofolate reductase family.

The catalysed reaction is (6S)-5,6,7,8-tetrahydrofolate + NADP(+) = 7,8-dihydrofolate + NADPH + H(+). It functions in the pathway cofactor biosynthesis; tetrahydrofolate biosynthesis; 5,6,7,8-tetrahydrofolate from 7,8-dihydrofolate: step 1/1. Key enzyme in folate metabolism. Catalyzes an essential reaction for de novo glycine and purine synthesis, and for DNA precursor synthesis. In Neisseria gonorrhoeae, this protein is Dihydrofolate reductase (folA).